Consider the following 239-residue polypeptide: 1-(5-phosphoribosyl)-5-[(5-phosphoribosylamino)methylideneamino] imidazole-4-carboxamide isomerase (239 aa).

Asp9 serves as the catalytic Proton acceptor. The active-site Proton donor is Asp131.

Belongs to the HisA/HisF family.

It is found in the cytoplasm. The catalysed reaction is 1-(5-phospho-beta-D-ribosyl)-5-[(5-phospho-beta-D-ribosylamino)methylideneamino]imidazole-4-carboxamide = 5-[(5-phospho-1-deoxy-D-ribulos-1-ylimino)methylamino]-1-(5-phospho-beta-D-ribosyl)imidazole-4-carboxamide. Its pathway is amino-acid biosynthesis; L-histidine biosynthesis; L-histidine from 5-phospho-alpha-D-ribose 1-diphosphate: step 4/9. This Parabacteroides distasonis (strain ATCC 8503 / DSM 20701 / CIP 104284 / JCM 5825 / NCTC 11152) protein is 1-(5-phosphoribosyl)-5-[(5-phosphoribosylamino)methylideneamino] imidazole-4-carboxamide isomerase.